Here is a 483-residue protein sequence, read N- to C-terminus: Pre-glycoprotein polyprotein GP complex (483 aa).

Gly-2 is lipidated: N-myristoyl glycine; by host. Over 2–17 (GQFISFMQEIPIFLQE) the chain is Extracellular. A helical membrane pass occupies residues 18 to 32 (ALNIALVAVSLICIV). Lys-33 is a topological domain (cytoplasmic). The helical transmembrane segment at 34-53 (GLVNLYRCGLFQLMVFLVLA) threads the bilayer. Extracellular-facing segments span residues 54–58 (GRSCS) and 59–422 (EETF…TLVD). Cys-57 contacts Zn(2+). 2 N-linked (GlcNAc...) asparagine; by host glycosylation sites follow: Asn-83 and Asn-95. Disulfide bonds link Cys-92–Cys-224, Cys-134–Cys-162, Cys-205–Cys-211, Cys-269–Cys-282, Cys-291–Cys-300, and Cys-354–Cys-375. Asn-164 and Asn-176 each carry an N-linked (GlcNAc...) asparagine; by host glycan. Asn-355, Asn-363, Asn-380, and Asn-385 each carry an N-linked (GlcNAc...) asparagine; by host glycan. Residues 423 to 443 (ICFWSTVFFTSTLFLHLIGFP) form a helical membrane-spanning segment. At 444–483 (THEHIRGEGCPLPHRLNSMGGCRCGKYLPLKKPTIWHRRH) the chain is on the cytoplasmic side. Zn(2+) contacts are provided by His-445, His-447, Cys-453, His-457, Cys-465, Cys-467, and His-483.

It belongs to the arenaviridae GPC protein family. Homotetramer; disulfide-linked. In terms of assembly, homotetramer. GP2 homotetramers bind through ionic interactions with GP1 homotetramers to form the GP complex together with the stable signal peptide. The GP-C polyprotein interacts with the host protease MBTPS1/SKI-1 resulting in the polyprotein processing. Specific enzymatic cleavages in vivo yield mature proteins. GP-C polyprotein is cleaved in the endoplasmic reticulum by the host protease MBTPS1. Only cleaved glycoprotein is incorporated into virions. In terms of processing, the SSP remains stably associated with the GP complex following cleavage by signal peptidase and plays crucial roles in the trafficking of GP through the secretory pathway. Post-translationally, myristoylation is necessary for GP2-mediated fusion activity.

The protein localises to the virion membrane. It localises to the host endoplasmic reticulum membrane. It is found in the host Golgi apparatus membrane. Its subcellular location is the host cell membrane. Class I viral fusion protein that directs fusion of viral and host endosomal membranes, leading to delivery of the nucleocapsid into the cytoplasm. Membrane fusion is mediated by irreversible conformational changes induced upon acidification in the endosome. Functionally, stable signal peptide (SSP): cleaved and functions as a signal peptide. In addition, it is also retained as the third component of the GP complex. The SSP is required for efficient glycoprotein expression, post-translational maturation cleavage of GP1 and GP2, glycoprotein transport to the cell surface plasma membrane, formation of infectious virus particles, and acid pH-dependent glycoprotein-mediated cell fusion. In terms of biological role, interacts with the host receptor. This is Pre-glycoprotein polyprotein GP complex from Tacaribe virus (strain V5) (TCRV).